The primary structure comprises 223 residues: Phosphoribosylformylglycinamidine synthase subunit PurQ (223 aa).

A Glutamine amidotransferase type-1 domain is found at 3–223 (FAVLVFPGSN…MVKSWREQHV (221 aa)). C85 functions as the Nucleophile in the catalytic mechanism. Active-site residues include H193 and E195.

As to quaternary structure, part of the FGAM synthase complex composed of 1 PurL, 1 PurQ and 2 PurS subunits.

It localises to the cytoplasm. It carries out the reaction N(2)-formyl-N(1)-(5-phospho-beta-D-ribosyl)glycinamide + L-glutamine + ATP + H2O = 2-formamido-N(1)-(5-O-phospho-beta-D-ribosyl)acetamidine + L-glutamate + ADP + phosphate + H(+). The enzyme catalyses L-glutamine + H2O = L-glutamate + NH4(+). Its pathway is purine metabolism; IMP biosynthesis via de novo pathway; 5-amino-1-(5-phospho-D-ribosyl)imidazole from N(2)-formyl-N(1)-(5-phospho-D-ribosyl)glycinamide: step 1/2. Its function is as follows. Part of the phosphoribosylformylglycinamidine synthase complex involved in the purines biosynthetic pathway. Catalyzes the ATP-dependent conversion of formylglycinamide ribonucleotide (FGAR) and glutamine to yield formylglycinamidine ribonucleotide (FGAM) and glutamate. The FGAM synthase complex is composed of three subunits. PurQ produces an ammonia molecule by converting glutamine to glutamate. PurL transfers the ammonia molecule to FGAR to form FGAM in an ATP-dependent manner. PurS interacts with PurQ and PurL and is thought to assist in the transfer of the ammonia molecule from PurQ to PurL. The chain is Phosphoribosylformylglycinamidine synthase subunit PurQ from Staphylococcus aureus (strain Mu50 / ATCC 700699).